Reading from the N-terminus, the 708-residue chain is Leukotoxin translocation ATP-binding protein LktB (708 aa).

Residues 1-126 form the Peptidase C39 domain; that stretch reads MEANHQRNDL…ACYQGQLILV (126 aa). Positions 155-437 constitute an ABC transmembrane type-1 domain; sequence FLETLIVSIF…LAQLWQDFQQ (283 aa). 5 consecutive transmembrane segments (helical) span residues 159 to 179, 192 to 212, 270 to 290, 296 to 316, and 389 to 409; these read LIVS…FQVV, LNII…LSGL, ALTS…MWYY, LVIL…SPIL, and VMVI…LSIG. The region spanning 469-704 is the ABC transporter domain; the sequence is IAFKNIRFRY…SNGLYSYLHQ (236 aa). 503 to 510 contributes to the ATP binding site; it reads GRSGSGKS.

It belongs to the ABC transporter superfamily. Protein-1 exporter (TC 3.A.1.109) family. As to quaternary structure, homodimer.

Its subcellular location is the cell inner membrane. The enzyme catalyses ATP + H2O + proteinSide 1 = ADP + phosphate + proteinSide 2.. Functionally, part of the ABC transporter complex LktBD involved in leukotoxin export. Transmembrane domains (TMD) form a pore in the inner membrane and the ATP-binding domain (NBD) is responsible for energy generation. In Mannheimia glucosida, this protein is Leukotoxin translocation ATP-binding protein LktB (lktB).